The following is an 89-amino-acid chain: Phosphocarrier protein HPr (89 aa).

One can recognise an HPr domain in the interval 2–89 (AKFSAIITDK…TMIDTALIQG (88 aa)). The active-site Pros-phosphohistidine intermediate is the His15. Position 46 is a phosphoserine; by HPrK/P (Ser46).

This sequence belongs to the HPr family.

The protein localises to the cytoplasm. With respect to regulation, phosphorylation on Ser-46 inhibits the phosphoryl transfer from enzyme I to HPr. General (non sugar-specific) component of the phosphoenolpyruvate-dependent sugar phosphotransferase system (sugar PTS). This major carbohydrate active-transport system catalyzes the phosphorylation of incoming sugar substrates concomitantly with their translocation across the cell membrane. The phosphoryl group from phosphoenolpyruvate (PEP) is transferred to the phosphoryl carrier protein HPr by enzyme I. Phospho-HPr then transfers it to the PTS EIIA domain. Functionally, P-Ser-HPr interacts with the catabolite control protein A (CcpA), forming a complex that binds to DNA at the catabolite response elements cre, operator sites preceding a large number of catabolite-regulated genes. Thus, P-Ser-HPr is a corepressor in carbon catabolite repression (CCR), a mechanism that allows bacteria to coordinate and optimize the utilization of available carbon sources. P-Ser-HPr also plays a role in inducer exclusion, in which it probably interacts with several non-PTS permeases and inhibits their transport activity. In Mycoplasma capricolum subsp. capricolum (strain California kid / ATCC 27343 / NCTC 10154), this protein is Phosphocarrier protein HPr (ptsH).